Here is a 34-residue protein sequence, read N- to C-terminus: Cytochrome b6-f complex subunit 8 (34 aa).

A helical transmembrane segment spans residues 3–23; that stretch reads LLTFGWAALLAVFTFSLAMVV.

This sequence belongs to the PetN family. The 4 large subunits of the cytochrome b6-f complex are cytochrome b6, subunit IV (17 kDa polypeptide, PetD), cytochrome f and the Rieske protein, while the 4 small subunits are PetG, PetL, PetM and PetN. The complex functions as a dimer.

It localises to the cellular thylakoid membrane. Functionally, component of the cytochrome b6-f complex, which mediates electron transfer between photosystem II (PSII) and photosystem I (PSI), cyclic electron flow around PSI, and state transitions. The chain is Cytochrome b6-f complex subunit 8 from Synechococcus elongatus (strain ATCC 33912 / PCC 7942 / FACHB-805) (Anacystis nidulans R2).